Reading from the N-terminus, the 430-residue chain is MANVVVVGAQWGDEGKGKIVDWLSERADVIARFQGGHNAGHTLVIDGEVYKLHALPSGVVRGGKLSVIGNGVVLDPWHLVKEIATIRDQGVEITPETLMIAENTPLILPFHGELDRARENQNSVAKIGTTGRGIGPAYEDKVGRRVIRVADLADAATLELRVDRALVHHNALRSGLGLDPIDRDALLVSLREIAPQILPFAAPVWKVLNEKRKAGKRILFEGAQGALLDIDFGTYPFVTSSNVIAGQAATGVGIGPGAIDYVLGIVKAYTTRVGEGPFPTELDDADGERLGTRGHEFGTTTGRKRRCGWFDAALLRQTCATSGINGIALTKLDVLDGFETLKICVGYDLDGTRLDYLPTAADQQARCTPIYEEMPGWSESTEGARSWADLPANAIKYVRRVEELIDCPVAMVSTSPEREDTILVTDPFAD.

Residues Gly-12–Lys-18 and Gly-40–Thr-42 each bind GTP. Asp-13 serves as the catalytic Proton acceptor. Residues Asp-13 and Gly-40 each contribute to the Mg(2+) site. IMP-binding positions include Asp-13 to Lys-16, Asn-38 to His-41, Thr-130, Arg-144, Gln-224, Thr-239, and Arg-303. Catalysis depends on His-41, which acts as the Proton donor. Substrate is bound at residue Thr-299–Arg-305. GTP contacts are provided by residues Arg-305, Lys-331–Asp-333, and Ser-413–Ser-415.

The protein belongs to the adenylosuccinate synthetase family. In terms of assembly, homodimer. It depends on Mg(2+) as a cofactor.

The protein resides in the cytoplasm. It carries out the reaction IMP + L-aspartate + GTP = N(6)-(1,2-dicarboxyethyl)-AMP + GDP + phosphate + 2 H(+). Its pathway is purine metabolism; AMP biosynthesis via de novo pathway; AMP from IMP: step 1/2. In terms of biological role, plays an important role in the de novo pathway of purine nucleotide biosynthesis. Catalyzes the first committed step in the biosynthesis of AMP from IMP. The polypeptide is Adenylosuccinate synthetase (Ruegeria pomeroyi (strain ATCC 700808 / DSM 15171 / DSS-3) (Silicibacter pomeroyi)).